We begin with the raw amino-acid sequence, 348 residues long: Carbamoyl phosphate synthase small chain (348 aa).

Residues 1–167 (MKRYLITSDG…VKNIRGKGER (167 aa)) are CPSase. Residues serine 45, glycine 213, and glycine 215 each coordinate L-glutamine. The 181-residue stretch at 168-348 (RILFIDLGSK…RRRTEDAAKG (181 aa)) folds into the Glutamine amidotransferase type-1 domain. The active-site Nucleophile is cysteine 242. L-glutamine contacts are provided by phenylalanine 243, glutamine 246, asparagine 282, glycine 284, and tyrosine 285. Residues histidine 321 and glutamate 323 contribute to the active site.

Belongs to the CarA family. As to quaternary structure, composed of two chains; the small (or glutamine) chain promotes the hydrolysis of glutamine to ammonia, which is used by the large (or ammonia) chain to synthesize carbamoyl phosphate. Tetramer of heterodimers (alpha,beta)4.

The catalysed reaction is hydrogencarbonate + L-glutamine + 2 ATP + H2O = carbamoyl phosphate + L-glutamate + 2 ADP + phosphate + 2 H(+). It catalyses the reaction L-glutamine + H2O = L-glutamate + NH4(+). It participates in amino-acid biosynthesis; L-arginine biosynthesis; carbamoyl phosphate from bicarbonate: step 1/1. The protein operates within pyrimidine metabolism; UMP biosynthesis via de novo pathway; (S)-dihydroorotate from bicarbonate: step 1/3. Its function is as follows. Small subunit of the glutamine-dependent carbamoyl phosphate synthetase (CPSase). CPSase catalyzes the formation of carbamoyl phosphate from the ammonia moiety of glutamine, carbonate, and phosphate donated by ATP, constituting the first step of 2 biosynthetic pathways, one leading to arginine and/or urea and the other to pyrimidine nucleotides. The small subunit (glutamine amidotransferase) binds and cleaves glutamine to supply the large subunit with the substrate ammonia. The sequence is that of Carbamoyl phosphate synthase small chain from Thermoplasma acidophilum (strain ATCC 25905 / DSM 1728 / JCM 9062 / NBRC 15155 / AMRC-C165).